Reading from the N-terminus, the 386-residue chain is 4-hydroxy-3-methylbut-2-en-1-yl diphosphate synthase (flavodoxin) (386 aa).

Residues C289, C292, C324, and E331 each coordinate [4Fe-4S] cluster.

Belongs to the IspG family. Requires [4Fe-4S] cluster as cofactor.

It carries out the reaction (2E)-4-hydroxy-3-methylbut-2-enyl diphosphate + oxidized [flavodoxin] + H2O + 2 H(+) = 2-C-methyl-D-erythritol 2,4-cyclic diphosphate + reduced [flavodoxin]. It functions in the pathway isoprenoid biosynthesis; isopentenyl diphosphate biosynthesis via DXP pathway; isopentenyl diphosphate from 1-deoxy-D-xylulose 5-phosphate: step 5/6. Its function is as follows. Converts 2C-methyl-D-erythritol 2,4-cyclodiphosphate (ME-2,4cPP) into 1-hydroxy-2-methyl-2-(E)-butenyl 4-diphosphate. The sequence is that of 4-hydroxy-3-methylbut-2-en-1-yl diphosphate synthase (flavodoxin) from Nitratidesulfovibrio vulgaris (strain ATCC 29579 / DSM 644 / CCUG 34227 / NCIMB 8303 / VKM B-1760 / Hildenborough) (Desulfovibrio vulgaris).